Here is a 109-residue protein sequence, read N- to C-terminus: Nucleoid-associated protein CC_0268 (109 aa).

Belongs to the YbaB/EbfC family. In terms of assembly, homodimer.

The protein localises to the cytoplasm. The protein resides in the nucleoid. Functionally, binds to DNA and alters its conformation. May be involved in regulation of gene expression, nucleoid organization and DNA protection. The protein is Nucleoid-associated protein CC_0268 of Caulobacter vibrioides (strain ATCC 19089 / CIP 103742 / CB 15) (Caulobacter crescentus).